Consider the following 424-residue polypeptide: DNA primase DnaG (424 aa).

The Toprim domain maps to 166 to 241 (DTIIIVEGRA…KVDFIARAPE (76 aa)). Mg(2+) contacts are provided by Glu-172, Asp-215, and Asp-217.

The protein belongs to the archaeal DnaG primase family. As to quaternary structure, forms a ternary complex with MCM helicase and DNA. Component of the archaeal exosome complex. Mg(2+) serves as cofactor.

It carries out the reaction ssDNA + n NTP = ssDNA/pppN(pN)n-1 hybrid + (n-1) diphosphate.. Its function is as follows. RNA polymerase that catalyzes the synthesis of short RNA molecules used as primers for DNA polymerase during DNA replication. Also part of the exosome, which is a complex involved in RNA degradation. Acts as a poly(A)-binding protein that enhances the interaction between heteromeric, adenine-rich transcripts and the exosome. The polypeptide is DNA primase DnaG (Staphylothermus marinus (strain ATCC 43588 / DSM 3639 / JCM 9404 / F1)).